The sequence spans 144 residues: 3-dehydroquinate dehydratase (144 aa).

Tyr22 (proton acceptor) is an active-site residue. The substrate site is built by Asn73, His79, and Asp86. His99 acts as the Proton donor in catalysis. Residues 100–101 (LS) and Arg110 each bind substrate.

Belongs to the type-II 3-dehydroquinase family. Homododecamer.

It carries out the reaction 3-dehydroquinate = 3-dehydroshikimate + H2O. It functions in the pathway metabolic intermediate biosynthesis; chorismate biosynthesis; chorismate from D-erythrose 4-phosphate and phosphoenolpyruvate: step 3/7. Its function is as follows. Catalyzes a trans-dehydration via an enolate intermediate. This chain is 3-dehydroquinate dehydratase, found in Trichlorobacter lovleyi (strain ATCC BAA-1151 / DSM 17278 / SZ) (Geobacter lovleyi).